The following is a 353-amino-acid chain: Putrescine N-methyltransferase 2 (353 aa).

A disordered region spans residues 15–50 (KSGAIPMNGHHNGTSKHQNGHKNGTSEQQNGTISLD). The span at 25–50 (HNGTSKHQNGHKNGTSEQQNGTISLD) shows a compositional bias: polar residues. The 238-residue stretch at 64-301 (PGWFSEFSAL…GVIGYMLCST (238 aa)) folds into the PABS domain. Residues Gln-95, Glu-170, and 201 to 202 (DG) each bind S-adenosyl-L-methionine. Asp-220 functions as the Proton acceptor in the catalytic mechanism. Position 289 (Tyr-289) interacts with S-adenosyl-L-methionine.

This sequence belongs to the class I-like SAM-binding methyltransferase superfamily. Putrescine methyltransferase family. Predominantly expressed in roots.

It carries out the reaction putrescine + S-adenosyl-L-methionine = N-methylputrescine + S-adenosyl-L-homocysteine + H(+). Its pathway is alkaloid biosynthesis; nicotine biosynthesis. Its function is as follows. Involved in the biosynthesis of pyridine alkaloid natural products, leading mainly to the production of anabasine, anatabine, nicotine and nornicotine, effective deterrents against herbivores with antiparasitic and pesticide properties (neurotoxins); nornicotine serves as the precursor in the synthesis of the carcinogen compound N'-nitrosonornicotine (NNN). Methyltransferase that mediates the conversion of putrescine to N-methylputrescine. Promotes leaves ripening. The chain is Putrescine N-methyltransferase 2 from Nicotiana tabacum (Common tobacco).